A 599-amino-acid chain; its full sequence is Translation initiation factor IF-2 (599 aa).

The tr-type G domain maps to Pro-111–Glu-278. The tract at residues Gly-120–Thr-127 is G1. Gly-120–Thr-127 is a binding site for GTP. A G2 region spans residues Gly-145 to His-149. Positions Asp-166–Gly-169 are G3. GTP contacts are provided by residues Asp-166 to His-170 and Asn-220 to Asp-223. The G4 stretch occupies residues Asn-220–Asp-223. The interval Ser-256–Leu-258 is G5.

This sequence belongs to the TRAFAC class translation factor GTPase superfamily. Classic translation factor GTPase family. IF-2 subfamily.

Its subcellular location is the cytoplasm. In terms of biological role, one of the essential components for the initiation of protein synthesis. Protects formylmethionyl-tRNA from spontaneous hydrolysis and promotes its binding to the 30S ribosomal subunits. Also involved in the hydrolysis of GTP during the formation of the 70S ribosomal complex. In Mesomycoplasma hyopneumoniae (strain 232) (Mycoplasma hyopneumoniae), this protein is Translation initiation factor IF-2.